A 533-amino-acid polypeptide reads, in one-letter code: D-3-phosphoglycerate dehydrogenase (533 aa).

An N-acetylalanine modification is found at Ala2. Ser14 carries the post-translational modification Phosphoserine. Lys58 is subject to N6-acetyllysine. NAD(+)-binding positions include Thr78, Arg155–Ile156, Asp175, Thr207, Cys234–Arg236, and Asp260. The residue at position 78 (Thr78) is a Phosphothreonine. Residue Arg236 is part of the active site. Residue Glu265 is part of the active site. His283 acts as the Proton donor in catalysis. His283–Ala286 is an NAD(+) binding site.

It belongs to the D-isomer specific 2-hydroxyacid dehydrogenase family. Homotetramer.

The catalysed reaction is (2R)-3-phosphoglycerate + NAD(+) = 3-phosphooxypyruvate + NADH + H(+). It catalyses the reaction (R)-2-hydroxyglutarate + NAD(+) = 2-oxoglutarate + NADH + H(+). It carries out the reaction (S)-malate + NAD(+) = oxaloacetate + NADH + H(+). The protein operates within amino-acid biosynthesis; L-serine biosynthesis; L-serine from 3-phospho-D-glycerate: step 1/3. In terms of biological role, catalyzes the reversible oxidation of 3-phospho-D-glycerate to 3-phosphonooxypyruvate, the first step of the phosphorylated L-serine biosynthesis pathway. Also catalyzes the reversible oxidation of 2-hydroxyglutarate to 2-oxoglutarate and the reversible oxidation of (S)-malate to oxaloacetate. This chain is D-3-phosphoglycerate dehydrogenase (PHGDH), found in Sus scrofa (Pig).